Consider the following 105-residue polypeptide: Secreted effector protein PINE1 (105 aa).

Residues 1–21 (MKLSQPLSIFAILAASTVAVA) form the signal peptide.

Interacts with Arabidopsis thaliana PGIP1.

It localises to the secreted. Functionally, effector protein required for full virulence. Directly interacts with and functionally inactivates PG-inhibiting proteins (PGIPs). PGIPs are a defense mechanism of infected plants, that inhibit the plant pathogens secreted polygalacturonases (PGs) used to degrade the plant cell wall. Excerts its function by interacting with host PGIPs to negate their polygalacturonase-inhibiting function via enhanced dissociation of PGIPs from PGs. The polypeptide is Secreted effector protein PINE1 (Sclerotinia sclerotiorum (strain ATCC 18683 / 1980 / Ss-1) (White mold)).